Reading from the N-terminus, the 406-residue chain is Argininosuccinate synthase (406 aa).

Residues alanine 10–serine 18 and alanine 37 each bind ATP. The L-citrulline site is built by tyrosine 88 and serine 93. An ATP-binding site is contributed by glycine 118. The L-aspartate site is built by threonine 120, asparagine 124, and aspartate 125. L-citrulline is bound at residue asparagine 124. Residues arginine 128, serine 179, serine 188, glutamate 264, and tyrosine 276 each coordinate L-citrulline.

Belongs to the argininosuccinate synthase family. Type 1 subfamily. As to quaternary structure, homotetramer.

It localises to the cytoplasm. The enzyme catalyses L-citrulline + L-aspartate + ATP = 2-(N(omega)-L-arginino)succinate + AMP + diphosphate + H(+). Its pathway is amino-acid biosynthesis; L-arginine biosynthesis; L-arginine from L-ornithine and carbamoyl phosphate: step 2/3. This chain is Argininosuccinate synthase, found in Dinoroseobacter shibae (strain DSM 16493 / NCIMB 14021 / DFL 12).